A 297-amino-acid polypeptide reads, in one-letter code: ClpXP adapter protein SpxH (297 aa).

The protein belongs to the SpxH family. Interacts with Spx.

It is found in the cytoplasm. Adapter protein required for efficient degradation of Spx by ClpXP under non-stress conditions. Interaction with Spx stabilizes Spx and exposes the C-terminus of Spx for recognition and proteolysis by ClpXP. This is ClpXP adapter protein SpxH from Bacillus cereus (strain ATCC 10987 / NRS 248).